Here is a 426-residue protein sequence, read N- to C-terminus: Putative zinc protease AlbF (426 aa).

A Zn(2+)-binding site is contributed by histidine 66. Catalysis depends on glutamate 69, which acts as the Proton acceptor. The Zn(2+) site is built by histidine 70 and glutamate 142.

The protein belongs to the peptidase M16 family. Requires Zn(2+) as cofactor.

Required for production of the bacteriocin subtilosin. Could catalyze some step in the processing of presubtilosin. The chain is Putative zinc protease AlbF (albF) from Bacillus subtilis (strain 168).